The chain runs to 148 residues: Large ribosomal subunit protein uL15 (148 aa).

The tract at residues 1-57 (MRLHDLYPFPEERKTRKRVGRGSGSGLGCTSGKGNKGQNARAGGGVRPGFEGGQMPL) is disordered. 2 stretches are compositionally biased toward gly residues: residues 21 to 35 (RGSG…GKGN) and 42 to 52 (AGGGVRPGFEG).

Belongs to the universal ribosomal protein uL15 family. In terms of assembly, part of the 50S ribosomal subunit.

Binds to the 23S rRNA. The polypeptide is Large ribosomal subunit protein uL15 (Nitratidesulfovibrio vulgaris (strain ATCC 29579 / DSM 644 / CCUG 34227 / NCIMB 8303 / VKM B-1760 / Hildenborough) (Desulfovibrio vulgaris)).